A 159-amino-acid polypeptide reads, in one-letter code: NADH-quinone oxidoreductase subunit B (159 aa).

[4Fe-4S] cluster-binding residues include C37, C38, C102, and C132.

This sequence belongs to the complex I 20 kDa subunit family. In terms of assembly, NDH-1 is composed of 14 different subunits. Subunits NuoB, C, D, E, F, and G constitute the peripheral sector of the complex. It depends on [4Fe-4S] cluster as a cofactor.

It localises to the cell inner membrane. It catalyses the reaction a quinone + NADH + 5 H(+)(in) = a quinol + NAD(+) + 4 H(+)(out). In terms of biological role, NDH-1 shuttles electrons from NADH, via FMN and iron-sulfur (Fe-S) centers, to quinones in the respiratory chain. The immediate electron acceptor for the enzyme in this species is believed to be ubiquinone. Couples the redox reaction to proton translocation (for every two electrons transferred, four hydrogen ions are translocated across the cytoplasmic membrane), and thus conserves the redox energy in a proton gradient. In Variovorax paradoxus (strain S110), this protein is NADH-quinone oxidoreductase subunit B.